Consider the following 642-residue polypeptide: Threonine--tRNA ligase (642 aa).

One can recognise a TGS domain in the interval 1-61; it reads MPVITLPDGS…ETDVDLAIIT (61 aa). Residues 243–534 are catalytic; it reads DHRKIGKQLD…LIEEYAGKFP (292 aa). 3 residues coordinate Zn(2+): cysteine 334, histidine 385, and histidine 511.

The protein belongs to the class-II aminoacyl-tRNA synthetase family. As to quaternary structure, homodimer. Requires Zn(2+) as cofactor.

It localises to the cytoplasm. It catalyses the reaction tRNA(Thr) + L-threonine + ATP = L-threonyl-tRNA(Thr) + AMP + diphosphate + H(+). Functionally, catalyzes the attachment of threonine to tRNA(Thr) in a two-step reaction: L-threonine is first activated by ATP to form Thr-AMP and then transferred to the acceptor end of tRNA(Thr). Also edits incorrectly charged L-seryl-tRNA(Thr). The sequence is that of Threonine--tRNA ligase from Shewanella loihica (strain ATCC BAA-1088 / PV-4).